We begin with the raw amino-acid sequence, 1072 residues long: Integrator complex subunit 3 homolog (1072 aa).

2 disordered regions span residues 920–943 (YPSS…STPS) and 1002–1072 (DTTV…NDSD). 4 positions are modified to phosphoserine: serine 1042, serine 1043, serine 1047, and serine 1048.

This sequence belongs to the Integrator subunit 3 family. Belongs to the multiprotein complex Integrator, at least composed of IntS1, IntS2, IntS3, IntS4, omd/IntS5, IntS6, defl/IntS7, IntS8, IntS9, IntS10, IntS11, IntS12, asun/IntS13, IntS14 and IntS15. The core complex associates with protein phosphatase 2A subunits mts/PP2A and Pp2A-29B, to form the Integrator-PP2A (INTAC) complex.

It is found in the nucleus. The protein resides in the cytoplasm. Component of the integrator complex, a multiprotein complex that terminates RNA polymerase II (Pol II) transcription in the promoter-proximal region of genes. The integrator complex provides a quality checkpoint during transcription elongation by driving premature transcription termination of transcripts that are unfavorably configured for transcriptional elongation: the complex terminates transcription by (1) catalyzing dephosphorylation of the C-terminal domain (CTD) of Pol II subunit Polr2A/Rbp1 and Spt5, and (2) degrading the exiting nascent RNA transcript via endonuclease activity. The integrator complex is also involved in the 3'-end processing of the U7 snRNA, and also the spliceosomal snRNAs U1, U2, U4 and U5. This is Integrator complex subunit 3 homolog (IntS3) from Drosophila yakuba (Fruit fly).